Consider the following 383-residue polypeptide: Nuclear hormone receptor family member nhr-217 (383 aa).

The segment at residues 53-127 is a DNA-binding region (nuclear receptor); that stretch reads IPACPVCDVP…AGLQRDYVRQ (75 aa). 2 consecutive NR C4-type zinc fingers follow at residues 56–77 and 93–109; these read CPVCDVPCRIEPHFGGIACAAC and CKREKLCRKARKSCRAC. One can recognise an NR LBD domain in the interval 172–383; that stretch reads ILKVSNSSLF…KLYVQIGIPF (212 aa).

Belongs to the nuclear hormone receptor family.

The protein localises to the nucleus. In terms of biological role, orphan nuclear receptor. This Caenorhabditis elegans protein is Nuclear hormone receptor family member nhr-217 (nhr-217).